The chain runs to 248 residues: 1-(5-phosphoribosyl)-5-[(5-phosphoribosylamino)methylideneamino] imidazole-4-carboxamide isomerase (248 aa).

D8 functions as the Proton acceptor in the catalytic mechanism. The active-site Proton donor is D131.

This sequence belongs to the HisA/HisF family.

The protein localises to the cytoplasm. It carries out the reaction 1-(5-phospho-beta-D-ribosyl)-5-[(5-phospho-beta-D-ribosylamino)methylideneamino]imidazole-4-carboxamide = 5-[(5-phospho-1-deoxy-D-ribulos-1-ylimino)methylamino]-1-(5-phospho-beta-D-ribosyl)imidazole-4-carboxamide. It functions in the pathway amino-acid biosynthesis; L-histidine biosynthesis; L-histidine from 5-phospho-alpha-D-ribose 1-diphosphate: step 4/9. This Cupriavidus necator (strain ATCC 17699 / DSM 428 / KCTC 22496 / NCIMB 10442 / H16 / Stanier 337) (Ralstonia eutropha) protein is 1-(5-phosphoribosyl)-5-[(5-phosphoribosylamino)methylideneamino] imidazole-4-carboxamide isomerase.